The sequence spans 840 residues: Kinesin-like protein KIN-14J (840 aa).

Residues 1–74 (MEADPAPSST…KGEEPVVSAE (74 aa)) are disordered. The 325-residue stretch at 177–501 (NIRVFCRCRP…LNFASRVRAI (325 aa)) folds into the Kinesin motor domain. Residue 260-267 (GQTGTGKT) participates in ATP binding. Positions 517–594 (KLKQMTEKIR…KKAARDTARS (78 aa)) form a coiled coil. Over residues 581 to 593 (LANEKKAARDTAR) the composition is skewed to basic and acidic residues. The disordered stretch occupies residues 581–617 (LANEKKAARDTARSTKPPLAPMRQRPPLGRIGNHIPP).

It belongs to the TRAFAC class myosin-kinesin ATPase superfamily. Kinesin family. KIN-14 subfamily.

The chain is Kinesin-like protein KIN-14J from Oryza sativa subsp. japonica (Rice).